The following is a 121-amino-acid chain: Putative iron-sulfur cluster insertion protein ErpA (121 aa).

Iron-sulfur cluster-binding residues include Cys49, Cys113, and Cys115.

This sequence belongs to the HesB/IscA family. Homodimer. Requires iron-sulfur cluster as cofactor.

Its function is as follows. Required for insertion of 4Fe-4S clusters. This Paracidovorax citrulli (strain AAC00-1) (Acidovorax citrulli) protein is Putative iron-sulfur cluster insertion protein ErpA.